The following is a 414-amino-acid chain: Phosphopentomutase (414 aa).

Mn(2+) contacts are provided by aspartate 10, aspartate 309, histidine 314, aspartate 350, histidine 351, and histidine 362.

It belongs to the phosphopentomutase family. The cofactor is Mn(2+).

Its subcellular location is the cytoplasm. It carries out the reaction 2-deoxy-alpha-D-ribose 1-phosphate = 2-deoxy-D-ribose 5-phosphate. The enzyme catalyses alpha-D-ribose 1-phosphate = D-ribose 5-phosphate. It functions in the pathway carbohydrate degradation; 2-deoxy-D-ribose 1-phosphate degradation; D-glyceraldehyde 3-phosphate and acetaldehyde from 2-deoxy-alpha-D-ribose 1-phosphate: step 1/2. Isomerase that catalyzes the conversion of deoxy-ribose 1-phosphate (dRib-1-P) and ribose 1-phosphate (Rib-1-P) to deoxy-ribose 5-phosphate (dRib-5-P) and ribose 5-phosphate (Rib-5-P), respectively. This Hahella chejuensis (strain KCTC 2396) protein is Phosphopentomutase.